A 308-amino-acid polypeptide reads, in one-letter code: Transaldolase (308 aa).

Lys125 functions as the Schiff-base intermediate with substrate in the catalytic mechanism.

The protein belongs to the transaldolase family. Type 1 subfamily. As to quaternary structure, homodimer.

The protein localises to the cytoplasm. It carries out the reaction D-sedoheptulose 7-phosphate + D-glyceraldehyde 3-phosphate = D-erythrose 4-phosphate + beta-D-fructose 6-phosphate. It participates in carbohydrate degradation; pentose phosphate pathway; D-glyceraldehyde 3-phosphate and beta-D-fructose 6-phosphate from D-ribose 5-phosphate and D-xylulose 5-phosphate (non-oxidative stage): step 2/3. Functionally, transaldolase is important for the balance of metabolites in the pentose-phosphate pathway. The sequence is that of Transaldolase from Pseudomonas putida (strain ATCC 47054 / DSM 6125 / CFBP 8728 / NCIMB 11950 / KT2440).